We begin with the raw amino-acid sequence, 515 residues long: Protein aaim-1 (515 aa).

A signal peptide spans 1–16 (MRLLFFFSILYTASLC). N-linked (GlcNAc...) asparagine glycans are attached at residues Asn-46 and Asn-127. The segment at 248 to 267 (RRTDPNSKFKPRPTTSQSNG) is disordered. N-linked (GlcNAc...) asparagine glycosylation is present at Asn-447.

As to expression, expressed in the terminal bulb of the pharynx and the posterior of the intestine (at protein level). Expressed by intestinal cells and secreted into the intestinal lumen (at protein level).

It is found in the secreted. Functionally, plays a role in promoting resistance to bacterial pathogens such as P.aeruginosa by inhibiting bacterial intestinal colonization. Its function is as follows. (Microbial infection) Promotes infection by microsporidian pathogens such as N.parisii in the early larval stages of development. Involved in ensuring the proper orientation and location of the spore proteins of N.parisii during intestinal cell invasion. The polypeptide is Protein aaim-1 (Caenorhabditis elegans).